Here is a 118-residue protein sequence, read N- to C-terminus: MARIAGVNIPDNKHTVISLTYIYGVGRTTAQKICAATGVNPAAKIKDLTDEQIEQLRGEVAKVNTEGDLRREVNMKIKRLMDLGCYRGLRHRKGLPVRGQRTKTNARTRKGPRKPIRK.

Residues 93–118 (KGLPVRGQRTKTNARTRKGPRKPIRK) are disordered.

This sequence belongs to the universal ribosomal protein uS13 family. As to quaternary structure, part of the 30S ribosomal subunit. Forms a loose heterodimer with protein S19. Forms two bridges to the 50S subunit in the 70S ribosome.

Its function is as follows. Located at the top of the head of the 30S subunit, it contacts several helices of the 16S rRNA. In the 70S ribosome it contacts the 23S rRNA (bridge B1a) and protein L5 of the 50S subunit (bridge B1b), connecting the 2 subunits; these bridges are implicated in subunit movement. Contacts the tRNAs in the A and P-sites. The sequence is that of Small ribosomal subunit protein uS13 from Ectopseudomonas mendocina (strain ymp) (Pseudomonas mendocina).